Reading from the N-terminus, the 161-residue chain is Probable cell wall elongation regulator TseB (161 aa).

Topologically, residues 1–5 are cytoplasmic; sequence MRKKA. Residues 6–26 form a helical membrane-spanning segment; that stretch reads LIFTVIFGIIFLAVLLVSASI. The Extracellular portion of the chain corresponds to 27–161; that stretch reads YKSAMAQKEE…TGKILKNITP (135 aa).

In terms of assembly, interacts with the penicillin-binding protein PBP2A, a monofunctional transpeptidase.

It is found in the cell membrane. Required for normal cell shape. Plays an important role in cell wall elongation during exponential phase and spore outgrowth. Probably regulates the activity of the penicillin-binding protein PBP2A through a direct interaction. Not required for PBP2A activity, stability and localization. This chain is Probable cell wall elongation regulator TseB, found in Bacillus subtilis (strain 168).